A 71-amino-acid polypeptide reads, in one-letter code: Ranatuerin-2Va (71 aa).

The N-terminal stretch at 1 to 22 (MFTLKKSFLLLFFLGTITLSLC) is a signal peptide. Positions 23-43 (EQERGADEDDGVEMTEEEVKR) are excised as a propeptide. Cysteine 66 and cysteine 71 are disulfide-bonded.

As to expression, expressed by the skin glands.

It localises to the secreted. Its function is as follows. Antimicrobial peptide. This Odorrana versabilis (Chinese bamboo leaf odorous frog) protein is Ranatuerin-2Va.